We begin with the raw amino-acid sequence, 174 residues long: Dual-action ribosomal maturation protein DarP (174 aa).

The protein belongs to the DarP family.

Its subcellular location is the cytoplasm. Functionally, member of a network of 50S ribosomal subunit biogenesis factors which assembles along the 30S-50S interface, preventing incorrect 23S rRNA structures from forming. Promotes peptidyl transferase center (PTC) maturation. The sequence is that of Dual-action ribosomal maturation protein DarP from Vibrio atlanticus (strain LGP32) (Vibrio splendidus (strain Mel32)).